The primary structure comprises 314 residues: Homeobox-leucine zipper protein HAT7 (314 aa).

The interval 77 to 109 is disordered; the sequence is HHHLTQKSPTTTNNMNDQDQVGEEDNLSDDGSH. A compositionally biased stretch (polar residues) spans 82–95; the sequence is QKSPTTTNNMNDQD. Residues 112–171 constitute a DNA-binding region (homeobox); sequence LGEKKKRLNLEQVRALEKSFELGNKLEPERKMQLAKALGLQPRQIAIWFQNRRARWKTKQ. A leucine-zipper region spans residues 172–207; it reads LERDYDSLKKQFDVLKSDNDSLLAHNKKLHAELVAL.

It belongs to the HD-ZIP homeobox family. Class I subfamily. As to expression, expressed predominantly in flowers, and in the cortex of the root and the stem.

It is found in the nucleus. Functionally, probable transcription factor. This chain is Homeobox-leucine zipper protein HAT7 (HAT7), found in Arabidopsis thaliana (Mouse-ear cress).